A 745-amino-acid polypeptide reads, in one-letter code: GTPase-activating protein GYP7 (745 aa).

In terms of domain architecture, Rab-GAP TBC spans 391–623 (LADDATRKEV…NIWEVFFTDF (233 aa)).

Its function is as follows. Most effectively accelerate the intrinsic GTPase activity of YPT7. It is also active, but to a lesser extent, on YPT31, YPT32 and YPT1. YPT6 and SEC4. This is GTPase-activating protein GYP7 (GYP7) from Candida glabrata (strain ATCC 2001 / BCRC 20586 / JCM 3761 / NBRC 0622 / NRRL Y-65 / CBS 138) (Yeast).